The primary structure comprises 582 residues: Aspartate--tRNA(Asp/Asn) ligase (582 aa).

Glutamate 177 contributes to the L-aspartate binding site. Residues glutamine 201–lysine 204 are aspartate. Arginine 223 is an L-aspartate binding site. ATP-binding positions include arginine 223 to glutamate 225 and glutamine 232. Histidine 447 contacts L-aspartate. Glutamate 481 is an ATP binding site. Arginine 488 is a binding site for L-aspartate. Residue glycine 533–arginine 536 participates in ATP binding.

Belongs to the class-II aminoacyl-tRNA synthetase family. Type 1 subfamily. Homodimer.

The protein localises to the cytoplasm. The enzyme catalyses tRNA(Asx) + L-aspartate + ATP = L-aspartyl-tRNA(Asx) + AMP + diphosphate. Functionally, aspartyl-tRNA synthetase with relaxed tRNA specificity since it is able to aspartylate not only its cognate tRNA(Asp) but also tRNA(Asn). Reaction proceeds in two steps: L-aspartate is first activated by ATP to form Asp-AMP and then transferred to the acceptor end of tRNA(Asp/Asn). The sequence is that of Aspartate--tRNA(Asp/Asn) ligase from Chlamydia trachomatis serovar L2 (strain ATCC VR-902B / DSM 19102 / 434/Bu).